Here is a 711-residue protein sequence, read N- to C-terminus: L-type lectin-domain containing receptor kinase VIII.2 (711 aa).

The N-terminal stretch at 1–30 (MLKLPPRFFSVYSTLIHILASFLCSSDVRG) is a signal peptide. Residues 31 to 315 (DFPATRFDLG…NKLCKKSPAA (285 aa)) are Extracellular-facing. A legume-lectin like region spans residues 35–260 (TRFDLGTLTL…IHSVDWWSFS (226 aa)). Asn-57 is a glycosylation site (N-linked (GlcNAc...) asparagine). Residues 265–306 (ESSESPPPMPNSPPPSSPSSSITPSLSTVRRKTADPSSSCRN) form a disordered region. Positions 269–281 (SPPPMPNSPPPSS) are enriched in pro residues. The span at 282-291 (PSSSITPSLS) shows a compositional bias: low complexity. The chain crosses the membrane as a helical span at residues 316–336 (VAGVVTAGAFFLALFAGVIIW). Topologically, residues 337 to 711 (VYSKKIKYTR…IFIVGKDRSV (375 aa)) are cytoplasmic. One can recognise a Protein kinase domain in the interval 374-656 (FSSSRVIGNG…LVGEADVPEV (283 aa)). Residues 380-388 (IGNGAFGTV) and Lys-403 contribute to the ATP site. Asp-497 acts as the Proton acceptor in catalysis.

The protein in the C-terminal section; belongs to the protein kinase superfamily. Ser/Thr protein kinase family. In the N-terminal section; belongs to the leguminous lectin family.

It is found in the cell membrane. It catalyses the reaction L-seryl-[protein] + ATP = O-phospho-L-seryl-[protein] + ADP + H(+). It carries out the reaction L-threonyl-[protein] + ATP = O-phospho-L-threonyl-[protein] + ADP + H(+). In terms of biological role, involved in resistance response to the pathogenic oomycetes Phytophthora infestans and Phytophthora capsici. In Arabidopsis thaliana (Mouse-ear cress), this protein is L-type lectin-domain containing receptor kinase VIII.2.